The primary structure comprises 425 residues: Glutamyl-tRNA reductase (425 aa).

Substrate is bound by residues 49-52, serine 107, 112-114, and glutamine 118; these read TCNR and EPQ. Cysteine 50 (nucleophile) is an active-site residue. Residue 187-192 coordinates NADP(+); that stretch reads GAGETI.

The protein belongs to the glutamyl-tRNA reductase family. As to quaternary structure, homodimer.

The enzyme catalyses (S)-4-amino-5-oxopentanoate + tRNA(Glu) + NADP(+) = L-glutamyl-tRNA(Glu) + NADPH + H(+). It functions in the pathway porphyrin-containing compound metabolism; protoporphyrin-IX biosynthesis; 5-aminolevulinate from L-glutamyl-tRNA(Glu): step 1/2. Functionally, catalyzes the NADPH-dependent reduction of glutamyl-tRNA(Glu) to glutamate 1-semialdehyde (GSA). In Pseudomonas putida (strain W619), this protein is Glutamyl-tRNA reductase.